Consider the following 390-residue polypeptide: Galactokinase (390 aa).

Residue 35–38 (EHTD) coordinates substrate. An ATP-binding site is contributed by 125 to 131 (GAGLSSS). Mg(2+)-binding residues include Ser-131 and Glu-163. Asp-175 acts as the Proton acceptor in catalysis. A substrate-binding site is contributed by Tyr-224.

It belongs to the GHMP kinase family. GalK subfamily.

The protein localises to the cytoplasm. It carries out the reaction alpha-D-galactose + ATP = alpha-D-galactose 1-phosphate + ADP + H(+). It participates in carbohydrate metabolism; galactose metabolism. Functionally, catalyzes the transfer of the gamma-phosphate of ATP to D-galactose to form alpha-D-galactose-1-phosphate (Gal-1-P). The protein is Galactokinase of Proteus mirabilis (strain HI4320).